A 1793-amino-acid polypeptide reads, in one-letter code: Brefeldin A-inhibited guanine nucleotide-exchange protein 2 (1793 aa).

Ala-2 carries the N-acetylalanine modification. 3 disordered regions span residues 45-71, 266-299, and 579-606; these read NSLQ…PGPL, TMSG…LLDS, and GSPQ…GGTS. Positions 55–66 are enriched in low complexity; sequence SSAATDSESESS. Over residues 270–281 the composition is skewed to gly residues; the sequence is SGSGSGSGGQDG. 2 stretches are compositionally biased toward polar residues: residues 284-294 and 594-605; these read GTTTVETTNPT and GSDTYSESSGGT. Ser-595 carries the post-translational modification Phosphoserine. The SEC7 domain occupies 610–797; the sequence is AIEQRRAYKL…RSLYERITKH (188 aa). The active site involves Glu-712. Residues 1311 to 1327 are compositionally biased toward polar residues; it reads NKYKGTSGKIPQSSLHS. The tract at residues 1311-1333 is disordered; sequence NKYKGTSGKIPQSSLHSGKSGKQ.

In terms of assembly, homodimer.

Its subcellular location is the cytoplasm. It localises to the cytosol. It is found in the membrane. With respect to regulation, inhibited by brefeldin A. Activates the ARF proteins by exchanging bound GDP for free GTP. Plays a role in vesicular protein sorting. This is Brefeldin A-inhibited guanine nucleotide-exchange protein 2 (BIG2) from Arabidopsis thaliana (Mouse-ear cress).